Reading from the N-terminus, the 359-residue chain is Peptide methionine sulfoxide reductase MsrA/MsrB (359 aa).

Residues 36–189 (RVIYLAGGCF…PGGYCHIDLK (154 aa)) form a peptide methionine sulfoxide reductase A region. C44 is a catalytic residue. The MsrB domain occupies 206-329 (DEVLKKKLTK…NSAALRFIPL (124 aa)). The active-site Nucleophile is the C318.

This sequence in the N-terminal section; belongs to the MsrA Met sulfoxide reductase family. In the C-terminal section; belongs to the MsrB Met sulfoxide reductase family.

It carries out the reaction L-methionyl-[protein] + [thioredoxin]-disulfide + H2O = L-methionyl-(S)-S-oxide-[protein] + [thioredoxin]-dithiol. The enzyme catalyses [thioredoxin]-disulfide + L-methionine + H2O = L-methionine (S)-S-oxide + [thioredoxin]-dithiol. It catalyses the reaction L-methionyl-[protein] + [thioredoxin]-disulfide + H2O = L-methionyl-(R)-S-oxide-[protein] + [thioredoxin]-dithiol. In terms of biological role, has an important function as a repair enzyme for proteins that have been inactivated by oxidation. Catalyzes the reversible oxidation-reduction of methionine sulfoxide in proteins to methionine. The protein is Peptide methionine sulfoxide reductase MsrA/MsrB (msrAB) of Helicobacter pylori (strain J99 / ATCC 700824) (Campylobacter pylori J99).